The chain runs to 247 residues: MSKLFWAMLAFISRLPVPSRWSQGLDFEQYSRGIVMFPFIGLILGGVSGLIFILLQSWCGIPLAALFCILALALLTGGFHLDGLADTCDGIFSARRRERMLEIMRDSRLGTHGGLALIFVLLTKILVVSELALRGTPMLAALAAACAAGRGSAVLLMYRHRYAREEGLGNVFIGKVSGRQTCITLGLAVIVATVLLPGMQGLAAMVVTCAAIFILGQLLKRTLGGQTGDTLGAAIELGELIFLLALL.

Transmembrane regions (helical) follow at residues 34–54 (IVMF…IFIL), 59–79 (CGIP…TGGF), 113–133 (GGLA…ELAL), 138–158 (MLAA…LLMY), and 187–207 (LAVI…AMVV).

It belongs to the CobS family. The cofactor is Mg(2+).

It localises to the cell inner membrane. It carries out the reaction alpha-ribazole + adenosylcob(III)inamide-GDP = adenosylcob(III)alamin + GMP + H(+). The catalysed reaction is alpha-ribazole 5'-phosphate + adenosylcob(III)inamide-GDP = adenosylcob(III)alamin 5'-phosphate + GMP + H(+). Its pathway is cofactor biosynthesis; adenosylcobalamin biosynthesis; adenosylcobalamin from cob(II)yrinate a,c-diamide: step 7/7. In terms of biological role, joins adenosylcobinamide-GDP and alpha-ribazole to generate adenosylcobalamin (Ado-cobalamin). Also synthesizes adenosylcobalamin 5'-phosphate from adenosylcobinamide-GDP and alpha-ribazole 5'-phosphate. The sequence is that of Adenosylcobinamide-GDP ribazoletransferase from Salmonella choleraesuis (strain SC-B67).